We begin with the raw amino-acid sequence, 764 residues long: 5-methyltetrahydropteroyltriglutamate--homocysteine methyltransferase (764 aa).

Residues 17–20 (RELK) and K117 contribute to the 5-methyltetrahydropteroyltri-L-glutamate site. Residues 436–438 (IGS) and E489 each bind L-homocysteine. L-methionine is bound by residues 436–438 (IGS) and E489. Residues 520 to 521 (RC) and W566 each bind 5-methyltetrahydropteroyltri-L-glutamate. Residue D604 coordinates L-homocysteine. An L-methionine-binding site is contributed by D604. E610 contributes to the 5-methyltetrahydropteroyltri-L-glutamate binding site. H646, C648, and E670 together coordinate Zn(2+). H699 (proton donor) is an active-site residue. Residue C731 participates in Zn(2+) binding.

Belongs to the vitamin-B12 independent methionine synthase family. It depends on Zn(2+) as a cofactor.

The enzyme catalyses 5-methyltetrahydropteroyltri-L-glutamate + L-homocysteine = tetrahydropteroyltri-L-glutamate + L-methionine. It functions in the pathway amino-acid biosynthesis; L-methionine biosynthesis via de novo pathway; L-methionine from L-homocysteine (MetE route): step 1/1. Functionally, catalyzes the transfer of a methyl group from 5-methyltetrahydrofolate to homocysteine resulting in methionine formation. The polypeptide is 5-methyltetrahydropteroyltriglutamate--homocysteine methyltransferase (Baumannia cicadellinicola subsp. Homalodisca coagulata).